The following is a 320-amino-acid chain: Metapyrocatechase 2 (320 aa).

Disordered stretches follow at residues 1–21 and 131–153; these read MDTH…RPRH and GPKT…GQRG. 2 VOC domains span residues 25-131 and 167-282; these read SIDH…VKIG and RLSH…YSAD. Fe cation contacts are provided by His-170, His-227, and Glu-278.

The protein belongs to the extradiol ring-cleavage dioxygenase family. Requires Fe(2+) as cofactor.

It catalyses the reaction catechol + O2 = (2Z,4E)-2-hydroxy-6-oxohexa-2,4-dienoate + H(+). This Cupriavidus necator (Alcaligenes eutrophus) protein is Metapyrocatechase 2 (mcpII).